The sequence spans 813 residues: G-type lectin S-receptor-like serine/threonine-protein kinase LECRK1 (813 aa).

The N-terminal stretch at 1–19 (MVALLLFPMLLQLLSPTCA) is a signal peptide. At 20 to 466 (QTQKNITLGS…NRKHWVLGSS (447 aa)) the chain is on the extracellular side. In terms of domain architecture, Bulb-type lectin spans 22–149 (QKNITLGSTL…DGTTKWQTFD (128 aa)). N-linked (GlcNAc...) asparagine glycosylation is found at asparagine 24, asparagine 57, asparagine 164, asparagine 168, asparagine 219, and asparagine 242. An EGF-like; atypical domain is found at 293–346 (PQNICHAIVSDVGSGVCGFNSYCTFDGTRNQIASCQCPPWYKFFDEQKKYKGCK). 5 cysteine pairs are disulfide-bonded: cysteine 297-cysteine 315, cysteine 309-cysteine 327, cysteine 329-cysteine 345, cysteine 391-cysteine 413, and cysteine 395-cysteine 401. Residues 354-433 (CDLDEATALA…NMADYVQRTV (80 aa)) form the PAN domain. Asparagine 407 and asparagine 441 each carry an N-linked (GlcNAc...) asparagine glycan. A helical membrane pass occupies residues 467-487 (LILGTSILVNFALISIFLFGT). Topologically, residues 488-813 (YCRIATKKNI…DPCSFISSLP (326 aa)) are cytoplasmic. The region spanning 523–797 (AGFHEILGAG…KVTQMLDGAV (275 aa)) is the Protein kinase domain. Residues 529–537 (LGAGASGVV) and lysine 553 contribute to the ATP site. Catalysis depends on aspartate 647, which acts as the Proton acceptor.

It belongs to the protein kinase superfamily. Ser/Thr protein kinase family.

The protein localises to the membrane. It catalyses the reaction L-seryl-[protein] + ATP = O-phospho-L-seryl-[protein] + ADP + H(+). The catalysed reaction is L-threonyl-[protein] + ATP = O-phospho-L-threonyl-[protein] + ADP + H(+). In terms of biological role, involved in innate immunity. Required for the expression of defense-related genes PR1A, LOX2 and CHS1 upon biotic stresses. Required for basal resistance to the fungal blast (M.grisea), bacterial blight (X.oryzae pv. oryzae, Xoo) and the herbivorous insect brown planthopper (N.lugens, BPH). May be involved in several defense signaling pathways. Involved in the promotion of seed germination. Required for the expression of alpha-amylase genes during seed germination. Involved in resistance against the herbivorous insect brown planthopper (N.lugens, BPH). Member of the BPH3 (BPH resistance locus 3) cluster which contains LECRK1, LECRK2 and LECRK3. The polypeptide is G-type lectin S-receptor-like serine/threonine-protein kinase LECRK1 (Oryza sativa subsp. japonica (Rice)).